A 201-amino-acid polypeptide reads, in one-letter code: Small ribosomal subunit protein uS4 (201 aa).

Residues 27–47 (SKKNYPPGQHGNSRKRKTSEY) are disordered. Positions 92 to 152 (GRLDNVVYRL…EKSKSMEVIA (61 aa)) constitute an S4 RNA-binding domain.

It belongs to the universal ribosomal protein uS4 family. Part of the 30S ribosomal subunit. Contacts protein S5. The interaction surface between S4 and S5 is involved in control of translational fidelity.

One of the primary rRNA binding proteins, it binds directly to 16S rRNA where it nucleates assembly of the body of the 30S subunit. Its function is as follows. With S5 and S12 plays an important role in translational accuracy. The protein is Small ribosomal subunit protein uS4 of Parabacteroides distasonis (strain ATCC 8503 / DSM 20701 / CIP 104284 / JCM 5825 / NCTC 11152).